Reading from the N-terminus, the 499-residue chain is Neuronal acetylcholine receptor subunit alpha-3 (499 aa).

The first 25 residues, 1 to 25, serve as a signal peptide directing secretion; the sequence is MGVVLPPPPLSMLMLVLMLLPVASA. Residues 26-244 are Extracellular-facing; the sequence is SEAEHRLFQY…PLFYTINLII (219 aa). 2 N-linked (GlcNAc...) asparagine glycosylation sites follow: Asn49 and Asn166. Cystine bridges form between Cys153-Cys167 and Cys217-Cys218. The chain crosses the membrane as a helical span at residues 245-260; the sequence is PCLLISFLTVLVFYLP. At 261 to 262 the chain is on the cytoplasmic side; the sequence is SD. A helical transmembrane segment spans residues 263–279; sequence CGEKVTLCISVLLSLTV. Glu265 contacts Na(+). Over 280–301 the chain is Extracellular; that stretch reads FLLVITETIPSTSLVIPLIGEY. A helical transmembrane segment spans residues 302-320; the sequence is LLFTMIFVTLSIVITVFVL. The Cytoplasmic segment spans residues 321 to 468; that stretch reads NVHYRTPTTH…QDDWKYVAMV (148 aa). A phosphoserine mark is found at Ser407 and Ser410. Residues 469 to 487 traverse the membrane as a helical segment; that stretch reads IDRIFLWVFILVCILGTAG. Residues 488–499 are Extracellular-facing; it reads LFLQPLMARDDT.

This sequence belongs to the ligand-gated ion channel (TC 1.A.9) family. Acetylcholine receptor (TC 1.A.9.1) subfamily. Alpha-3/CHRNA3 sub-subfamily. In terms of assembly, neuronal AChR is composed of two different types of subunits: alpha and beta. CHRNA3/Alpha-3 subunit can be combined to CHRNB2/beta-2 or CHRNB4/beta-4 to give rise to functional receptors. Part of a complex composed of STUB1/CHIP, VCP/p97, CHRNA3, and UBXN2A that modulates the ubiquitination and endoplasmic reticulum-associated degradation (ERAD) of CHRNA3. Within the complex UBXN2A acts as a scaffold protein required for the interaction of CHRNA3 with VCP/p97, this interaction also inhibits CHRNA3 ubiquitination by STUB1/CHIP and subsequently ERAD. Interacts with UBXN2A (via SEP domain), the interaction is required for the interaction of CHRNA3 in the STUB1:VCP:UBXN2A complex. Interacts with RIC3; which is required for proper folding and assembly. Interacts with LYPD6. In terms of processing, ubiquitinated; by STUB1/CHIP and thereafter degraded by the 26S proteosome complex. In terms of tissue distribution, expressed in the brain (at protein level).

The protein resides in the synaptic cell membrane. The protein localises to the cell membrane. It is found in the endoplasmic reticulum. Its subcellular location is the golgi apparatus. The enzyme catalyses K(+)(in) = K(+)(out). The catalysed reaction is Na(+)(in) = Na(+)(out). It catalyses the reaction Ca(2+)(in) = Ca(2+)(out). With respect to regulation, activated by a myriad of ligands such as acetylcholine, cytisine, nicotine, choline and epibatidine. The heteropentamer CHRNA3:CHRNB2 activity is blocked by alpha-conotoxins ImI, ImII, PnIA, GID and MII. The heteropentamer CHRNA3:CHRNB4 activity is blocked by the alpha-conotoxin ImI. Component of neuronal acetylcholine receptors (nAChRs) that function as pentameric, ligand-gated cation channels with high calcium permeability among other activities. nAChRs are excitatory neurotrasnmitter receptors formed by a collection of nAChR subunits known to mediate synaptic transmission in the nervous system and the neuromuscular junction. Each nAchR subunit confers differential attributes to channel properties, including activation, deactivation and desensitization kinetics, pH sensitivity, cation permeability, and binding to allosteric modulators. CHRNA3 forms heteropentameric neuronal acetylcholine receptors with CHRNA5, CHRNB2 and CHRNB4. CHRNA3:CHRNB4 being predominant in neurons of the autonomic ganglia, it is known as ganglionic nicotinic receptor. CHRNA3:CHRNB4 or CHRNA3:CHRNA5:CHRNB4 play also an important role in the habenulo-interpeduncular tract, modulating the mesolimbic dopamine system and affecting reward circuits and addiction. Hypothalamic CHRNA3:CHRNB4 nAChR activation by nicotine leads to activation of POMC neurons and a decrease in food intake. Also expressed in the urothelium where it modulates reflex bladder activity by increasing intracellular calcium through extracellular influx and basal ATP release. The polypeptide is Neuronal acetylcholine receptor subunit alpha-3 (Chrna3) (Mus musculus (Mouse)).